The sequence spans 338 residues: Ketol-acid reductoisomerase (NADP(+)) (338 aa).

Residues 1-181 (MTVYYDKDCN…GGGRTAIIET (181 aa)) enclose the KARI N-terminal Rossmann domain. Residues 24–27 (FGSQ), R47, S52, and 82–85 (DENQ) contribute to the NADP(+) site. H107 is a catalytic residue. Position 133 (G133) interacts with NADP(+). The region spanning 182–327 (TFKDETETDL…VKLRTMMPWI (146 aa)) is the KARI C-terminal knotted domain. Mg(2+) contacts are provided by D190, E194, E226, and E230. S251 contributes to the substrate binding site.

The protein belongs to the ketol-acid reductoisomerase family. The cofactor is Mg(2+).

It carries out the reaction (2R)-2,3-dihydroxy-3-methylbutanoate + NADP(+) = (2S)-2-acetolactate + NADPH + H(+). The enzyme catalyses (2R,3R)-2,3-dihydroxy-3-methylpentanoate + NADP(+) = (S)-2-ethyl-2-hydroxy-3-oxobutanoate + NADPH + H(+). It functions in the pathway amino-acid biosynthesis; L-isoleucine biosynthesis; L-isoleucine from 2-oxobutanoate: step 2/4. The protein operates within amino-acid biosynthesis; L-valine biosynthesis; L-valine from pyruvate: step 2/4. Its function is as follows. Involved in the biosynthesis of branched-chain amino acids (BCAA). Catalyzes an alkyl-migration followed by a ketol-acid reduction of (S)-2-acetolactate (S2AL) to yield (R)-2,3-dihydroxy-isovalerate. In the isomerase reaction, S2AL is rearranged via a Mg-dependent methyl migration to produce 3-hydroxy-3-methyl-2-ketobutyrate (HMKB). In the reductase reaction, this 2-ketoacid undergoes a metal-dependent reduction by NADPH to yield (R)-2,3-dihydroxy-isovalerate. The sequence is that of Ketol-acid reductoisomerase (NADP(+)) from Sulfurimonas denitrificans (strain ATCC 33889 / DSM 1251) (Thiomicrospira denitrificans (strain ATCC 33889 / DSM 1251)).